Here is a 65-residue protein sequence, read N- to C-terminus: Large ribosomal subunit protein bL35 (65 aa).

Residues 1-25 form a disordered region; sequence MPKMKSHRGAAKRFKKTGTGKLKRA.

It belongs to the bacterial ribosomal protein bL35 family.

This chain is Large ribosomal subunit protein bL35, found in Clostridium botulinum (strain Eklund 17B / Type B).